The chain runs to 35 residues: U14-ctenitoxin-Pn1a (35 aa).

3 disulfide bridges follow: Cys-3–Cys-17, Cys-10–Cys-22, and Cys-16–Cys-32.

Expressed by the venom gland.

Its subcellular location is the secreted. Neurotoxin. In Phoneutria nigriventer (Brazilian armed spider), this protein is U14-ctenitoxin-Pn1a.